Consider the following 117-residue polypeptide: Large ribosomal subunit protein bL20 (117 aa).

The protein belongs to the bacterial ribosomal protein bL20 family.

Functionally, binds directly to 23S ribosomal RNA and is necessary for the in vitro assembly process of the 50S ribosomal subunit. It is not involved in the protein synthesizing functions of that subunit. The sequence is that of Large ribosomal subunit protein bL20 from Finegoldia magna (strain ATCC 29328 / DSM 20472 / WAL 2508) (Peptostreptococcus magnus).